The chain runs to 111 residues: Large ribosomal subunit protein uL22 (111 aa).

The protein belongs to the universal ribosomal protein uL22 family. Part of the 50S ribosomal subunit.

Its function is as follows. This protein binds specifically to 23S rRNA; its binding is stimulated by other ribosomal proteins, e.g. L4, L17, and L20. It is important during the early stages of 50S assembly. It makes multiple contacts with different domains of the 23S rRNA in the assembled 50S subunit and ribosome. The globular domain of the protein is located near the polypeptide exit tunnel on the outside of the subunit, while an extended beta-hairpin is found that lines the wall of the exit tunnel in the center of the 70S ribosome. The polypeptide is Large ribosomal subunit protein uL22 (Francisella tularensis subsp. tularensis (strain FSC 198)).